A 974-amino-acid polypeptide reads, in one-letter code: Alpha-1,4 glucan phosphorylase L-2 isozyme, chloroplastic/amyloplastic (974 aa).

The N-terminal 81 residues, 1-81 (MATFAVSGLN…LDVFQPDSTS (81 aa)), are a transit peptide targeting the chloroplast. The disordered stretch occupies residues 509 to 551 (ADVEKAADEEQEEEGKDDSKDEETEAVKAETTNEEEETEVKKV). Over residues 517–532 (EEQEEEGKDDSKDEET) the composition is skewed to acidic residues. Residue lysine 820 is modified to N6-(pyridoxal phosphate)lysine.

This sequence belongs to the glycogen phosphorylase family. Pyridoxal 5'-phosphate is required as a cofactor. Leaves.

Its subcellular location is the plastid. It is found in the chloroplast. The protein resides in the amyloplast. The enzyme catalyses [(1-&gt;4)-alpha-D-glucosyl](n) + phosphate = [(1-&gt;4)-alpha-D-glucosyl](n-1) + alpha-D-glucose 1-phosphate. Its function is as follows. Phosphorylase is an important allosteric enzyme in carbohydrate metabolism. Enzymes from different sources differ in their regulatory mechanisms and in their natural substrates. However, all known phosphorylases share catalytic and structural properties. This chain is Alpha-1,4 glucan phosphorylase L-2 isozyme, chloroplastic/amyloplastic (STP-1), found in Solanum tuberosum (Potato).